Consider the following 560-residue polypeptide: Glucose-6-phosphate isomerase, cytosolic (560 aa).

Ala2 carries the N-acetylalanine modification. Glu361 acts as the Proton donor in catalysis. Active-site residues include His392 and Lys517.

It belongs to the GPI family. As to quaternary structure, homodimer.

It localises to the cytoplasm. The catalysed reaction is alpha-D-glucose 6-phosphate = beta-D-fructose 6-phosphate. It functions in the pathway carbohydrate degradation; glycolysis; D-glyceraldehyde 3-phosphate and glycerone phosphate from D-glucose: step 2/4. This is Glucose-6-phosphate isomerase, cytosolic (PGIC) from Arabidopsis lyrata subsp. petraea (Northern rock-cress).